Reading from the N-terminus, the 356-residue chain is Phosphoribosylformylglycinamidine cyclo-ligase (356 aa).

Belongs to the AIR synthase family.

The protein localises to the cytoplasm. The catalysed reaction is 2-formamido-N(1)-(5-O-phospho-beta-D-ribosyl)acetamidine + ATP = 5-amino-1-(5-phospho-beta-D-ribosyl)imidazole + ADP + phosphate + H(+). The protein operates within purine metabolism; IMP biosynthesis via de novo pathway; 5-amino-1-(5-phospho-D-ribosyl)imidazole from N(2)-formyl-N(1)-(5-phospho-D-ribosyl)glycinamide: step 2/2. The protein is Phosphoribosylformylglycinamidine cyclo-ligase of Nitrobacter hamburgensis (strain DSM 10229 / NCIMB 13809 / X14).